We begin with the raw amino-acid sequence, 1079 residues long: Alpha-mannosidase C (1079 aa).

The N-terminal stretch at 1-22 (MFYKTFGFLFIYLIILISGTLS) is a signal peptide. His-44 and Asp-46 together coordinate Zn(2+). Asn-60 and Asn-96 each carry an N-linked (GlcNAc...) asparagine glycan. Position 158 (Asp-158) interacts with Zn(2+). Residue Asp-158 is the Nucleophile of the active site. N-linked (GlcNAc...) asparagine glycosylation is found at Asn-192, Asn-222, Asn-248, and Asn-467. A Zn(2+)-binding site is contributed by His-475. Residues Asn-516, Asn-527, Asn-589, Asn-760, Asn-769, Asn-848, Asn-872, Asn-912, Asn-1040, and Asn-1057 are each glycosylated (N-linked (GlcNAc...) asparagine).

It belongs to the glycosyl hydrolase 38 family. Zn(2+) is required as a cofactor.

Its subcellular location is the secreted. It carries out the reaction Hydrolysis of terminal, non-reducing alpha-D-mannose residues in alpha-D-mannosides.. The sequence is that of Alpha-mannosidase C (manC) from Dictyostelium discoideum (Social amoeba).